Reading from the N-terminus, the 371-residue chain is GTPase Obg (371 aa).

One can recognise an Obg domain in the interval 1–159 (MKFVDEAYID…KNLKLELKVL (159 aa)). The 175-residue stretch at 160–334 (ADVGLLGMPN…LIRTIYKHVH (175 aa)) folds into the OBG-type G domain. Residues 166–173 (GMPNAGKS), 191–195 (FTTLH), 213–216 (DIPG), 284–287 (NKLD), and 315–317 (SAL) each bind GTP. Mg(2+) is bound by residues S173 and T193.

It belongs to the TRAFAC class OBG-HflX-like GTPase superfamily. OBG GTPase family. Monomer. Mg(2+) serves as cofactor.

The protein localises to the cytoplasm. In terms of biological role, an essential GTPase which binds GTP, GDP and possibly (p)ppGpp with moderate affinity, with high nucleotide exchange rates and a fairly low GTP hydrolysis rate. Plays a role in control of the cell cycle, stress response, ribosome biogenesis and in those bacteria that undergo differentiation, in morphogenesis control. This Delftia acidovorans (strain DSM 14801 / SPH-1) protein is GTPase Obg.